The primary structure comprises 351 residues: Methylthioribose-1-phosphate isomerase (351 aa).

Substrate is bound by residues 51–53, Arg-94, and Gln-199; that span reads RGA. Asp-240 (proton donor) is an active-site residue. Residue 250 to 251 participates in substrate binding; that stretch reads NK.

It belongs to the EIF-2B alpha/beta/delta subunits family. MtnA subfamily. As to quaternary structure, homodimer.

The catalysed reaction is 5-(methylsulfanyl)-alpha-D-ribose 1-phosphate = 5-(methylsulfanyl)-D-ribulose 1-phosphate. The protein operates within amino-acid biosynthesis; L-methionine biosynthesis via salvage pathway; L-methionine from S-methyl-5-thio-alpha-D-ribose 1-phosphate: step 1/6. In terms of biological role, catalyzes the interconversion of methylthioribose-1-phosphate (MTR-1-P) into methylthioribulose-1-phosphate (MTRu-1-P). The chain is Methylthioribose-1-phosphate isomerase from Bacillus thuringiensis (strain Al Hakam).